Here is a 220-residue protein sequence, read N- to C-terminus: Ribosomal RNA large subunit methyltransferase E (220 aa).

S-adenosyl-L-methionine contacts are provided by Gly-60, Trp-62, Asp-92, Asp-108, and Asp-133. Catalysis depends on Lys-173, which acts as the Proton acceptor. Positions 197 to 220 (RKPKASRDKSSETFILGRQLKQPR) are disordered.

The protein belongs to the class I-like SAM-binding methyltransferase superfamily. RNA methyltransferase RlmE family.

It is found in the cytoplasm. It carries out the reaction uridine(2552) in 23S rRNA + S-adenosyl-L-methionine = 2'-O-methyluridine(2552) in 23S rRNA + S-adenosyl-L-homocysteine + H(+). Its function is as follows. Specifically methylates the uridine in position 2552 of 23S rRNA at the 2'-O position of the ribose in the fully assembled 50S ribosomal subunit. This chain is Ribosomal RNA large subunit methyltransferase E, found in Burkholderia ambifaria (strain MC40-6).